The following is a 509-amino-acid chain: MKRALISVSDKNGIVPFAEKLVELGVEIISTGGTKAAFEQAGVPVTGIEAVTEFPEMLDGRVKTLHPAIHGGLLARRDTAEHMEAIAAHDIKPIDLVIVNLYPFQETIQKPGVTLEEAIENIDIGGPSMLRSAAKNYAAVTVVVDTADYDTVLTELQEHGATTFETRQRLAAKVFRHTAAYDALIAEYLTDVTGETFPEKVTLTYNRKQVLRYGENPHQDAAFYTEPRAIENSISAAKQLHGKELSYNNIRDADAALKIASEFKEPVAVAVKHMNPCGVGVGETIEEAYLKAYEADEISIFGGIVALNKEVDAKTAEHMSKIFLEIIIAPSFSEAGFAILAKKKNIRLLTVPFAGNVEGFEKTSVNGGLLIQANDALVEDTTSYEVVTEKQPTNSEMKALLAQWKIVKHVKSNAIVVGSDKQTLGIGAGQMNRIGSALIALEQAGEKAKGAVLASDAFFPMDDTVEAAAKAGITAIIQPGGSIKDKESIAMADKYGISMVLTHVRHFKH.

Residues 1-144 (MKRALISVSD…KNYAAVTVVV (144 aa)) enclose the MGS-like domain.

This sequence belongs to the PurH family.

It catalyses the reaction (6R)-10-formyltetrahydrofolate + 5-amino-1-(5-phospho-beta-D-ribosyl)imidazole-4-carboxamide = 5-formamido-1-(5-phospho-D-ribosyl)imidazole-4-carboxamide + (6S)-5,6,7,8-tetrahydrofolate. The enzyme catalyses IMP + H2O = 5-formamido-1-(5-phospho-D-ribosyl)imidazole-4-carboxamide. The protein operates within purine metabolism; IMP biosynthesis via de novo pathway; 5-formamido-1-(5-phospho-D-ribosyl)imidazole-4-carboxamide from 5-amino-1-(5-phospho-D-ribosyl)imidazole-4-carboxamide (10-formyl THF route): step 1/1. It functions in the pathway purine metabolism; IMP biosynthesis via de novo pathway; IMP from 5-formamido-1-(5-phospho-D-ribosyl)imidazole-4-carboxamide: step 1/1. The protein is Bifunctional purine biosynthesis protein PurH of Listeria innocua serovar 6a (strain ATCC BAA-680 / CLIP 11262).